The following is a 266-amino-acid chain: PDZ domain-containing protein 9 (266 aa).

The region spanning 27-109 (KVIQTKLTVG…GTVLQIKAYR (83 aa)) is the PDZ domain.

This chain is PDZ domain-containing protein 9 (Pdzd9), found in Mus musculus (Mouse).